Consider the following 166-residue polypeptide: Protein SprT (166 aa).

The region spanning 19-164 (RDALARANLK…CVRCGDTLVA (146 aa)) is the SprT-like domain. Zn(2+) is bound at residue His78. Glu79 is a catalytic residue. His82 contributes to the Zn(2+) binding site.

Belongs to the SprT family. The cofactor is Zn(2+).

It is found in the cytoplasm. In Cronobacter sakazakii (strain ATCC BAA-894) (Enterobacter sakazakii), this protein is Protein SprT.